Consider the following 163-residue polypeptide: Putative 4-hydroxy-4-methyl-2-oxoglutarate aldolase (163 aa).

Residues 76–79 (GDML) and Arg-98 each bind substrate. Asp-99 serves as a coordination point for a divalent metal cation.

This sequence belongs to the class II aldolase/RraA-like family. In terms of assembly, homotrimer. Requires a divalent metal cation as cofactor.

The catalysed reaction is 4-hydroxy-4-methyl-2-oxoglutarate = 2 pyruvate. It catalyses the reaction oxaloacetate + H(+) = pyruvate + CO2. Its function is as follows. Catalyzes the aldol cleavage of 4-hydroxy-4-methyl-2-oxoglutarate (HMG) into 2 molecules of pyruvate. Also contains a secondary oxaloacetate (OAA) decarboxylase activity due to the common pyruvate enolate transition state formed following C-C bond cleavage in the retro-aldol and decarboxylation reactions. This chain is Putative 4-hydroxy-4-methyl-2-oxoglutarate aldolase, found in Pseudomonas putida (strain ATCC 47054 / DSM 6125 / CFBP 8728 / NCIMB 11950 / KT2440).